The following is a 445-amino-acid chain: Argininosuccinate lyase (445 aa).

The protein belongs to the lyase 1 family. Argininosuccinate lyase subfamily.

Its subcellular location is the cytoplasm. The catalysed reaction is 2-(N(omega)-L-arginino)succinate = fumarate + L-arginine. It participates in amino-acid biosynthesis; L-arginine biosynthesis; L-arginine from L-ornithine and carbamoyl phosphate: step 3/3. In Xylella fastidiosa (strain 9a5c), this protein is Argininosuccinate lyase.